The following is a 346-amino-acid chain: MTQSLTIRRPDDWHLHLRDGAMLEGVLPETTRHFARAIVMPNLVPPVVTGAEAAAYRERIMAALPAGARFEPLMVLYLTETTDPADVRAAAASGLVKAVKLYPAGATTNSASGVRDFDRVRGVLETMAEIGLPLCVHGEVTDPAVDIFDREAVFLERVLEPIRRATPGLRVVLEHVTTRDGLDYVRGGGPDMAGTLTTHHLIINRNHILAGGIRPHYYCLPVAKRETHRLALREAATGGEGCFFLGTDSAPHADAAKESACGCAGCFTATNTLSILAHVFEEEGALDRLEGFVALNGPAFYRLPPNEERITLRKGEPLVLPARIETGAGPVTLFDPGFPLLWHVES.

Zn(2+) contacts are provided by His-14 and His-16. Residues 16–18 and Asn-42 each bind substrate; that span reads HLR. 3 residues coordinate Zn(2+): Lys-100, His-137, and His-175. Lys-100 is subject to N6-carboxylysine. His-137 contributes to the substrate binding site. Substrate is bound at residue Leu-220. Asp-248 serves as a coordination point for Zn(2+). Asp-248 is a catalytic residue. The substrate site is built by His-252 and Ala-264.

Belongs to the metallo-dependent hydrolases superfamily. DHOase family. Class II DHOase subfamily. As to quaternary structure, homodimer. The cofactor is Zn(2+).

The enzyme catalyses (S)-dihydroorotate + H2O = N-carbamoyl-L-aspartate + H(+). Its pathway is pyrimidine metabolism; UMP biosynthesis via de novo pathway; (S)-dihydroorotate from bicarbonate: step 3/3. Catalyzes the reversible cyclization of carbamoyl aspartate to dihydroorotate. This chain is Dihydroorotase, found in Cereibacter sphaeroides (strain ATCC 17025 / ATH 2.4.3) (Rhodobacter sphaeroides).